Consider the following 1956-residue polypeptide: Sodium channel protein type 10 subunit alpha (1956 aa).

Over Met-1–Lys-125 the chain is Cytoplasmic. Positions Gln-27–Gln-54 are disordered. Positions Lys-40 to Gln-54 are enriched in basic and acidic residues. The I repeat unit spans residues Phe-116 to Gln-405. Residues Val-126–Arg-149 form a helical membrane-spanning segment. The Extracellular segment spans residues Thr-150–Glu-154. A helical transmembrane segment spans residues Lys-155–Ala-174. The Cytoplasmic portion of the chain corresponds to Arg-175–Asp-187. Residues Pro-188 to Ile-206 form a helical membrane-spanning segment. Topologically, residues Asp-207–Ser-212 are extracellular. Residues Gly-213–Leu-232 traverse the membrane as a helical; Voltage-sensor segment. Over Lys-233–Asp-248 the chain is Cytoplasmic. The helical transmembrane segment at Val-249–Leu-272 threads the bilayer. The Extracellular portion of the chain corresponds to Lys-273–Ser-341. Cys-276 and Cys-319 form a disulfide bridge. 4 N-linked (GlcNAc...) asparagine glycosylation sites follow: Asn-284, Asn-288, Asn-312, and Asn-335. The segment at residues Phe-342–Leu-366 is an intramembrane region (pore-forming). Residues Arg-367 to Tyr-373 lie on the Extracellular side of the membrane. A helical transmembrane segment spans residues Met-374–Ala-399. At Tyr-400–Phe-659 the chain is on the cytoplasmic side. Phosphoserine is present on residues Ser-441, Ser-444, Ser-467, and Ser-479. Polar residues predominate over residues His-443–Asn-454. 2 disordered regions span residues His-443–Arg-485 and Ser-500–Gly-580. Basic and acidic residues predominate over residues Asp-561–Gln-570. Phosphoserine occurs at positions 612 and 615. The II repeat unit spans residues Cys-647 to Gln-911. A helical membrane pass occupies residues Gly-660 to Met-684. At Glu-685–Ala-695 the chain is on the extracellular side. Residues Met-696 to Phe-719 traverse the membrane as a helical segment. The Cytoplasmic segment spans residues Asp-720 to Lys-727. A helical transmembrane segment spans residues Lys-728–Ala-747. The Extracellular portion of the chain corresponds to Lys-748–Ser-753. A helical; Voltage-sensor transmembrane segment spans residues Val-754–Leu-773. Over Asn-774–Asn-789 the chain is Cytoplasmic. A helical transmembrane segment spans residues Leu-790–Gly-810. Residues Glu-811–Asp-834 lie on the Extracellular side of the membrane. An N-linked (GlcNAc...) asparagine glycan is attached at Asn-819. The pore-forming intramembrane region spans Phe-835–Trp-855. Residues Ala-856–Ser-864 lie on the Extracellular side of the membrane. Cys-857 and Cys-866 are oxidised to a cystine. The chain crosses the membrane as a helical span at residues Ile-865 to Leu-890. Over Asn-891–Arg-1147 the chain is Cytoplasmic. Disordered regions lie at residues Ala-963–Asp-986 and Asp-1041–Val-1089. The III repeat unit spans residues Gln-1140–Leu-1449. The chain crosses the membrane as a helical span at residues Ile-1148–Phe-1171. At Glu-1172–Ala-1184 the chain is on the extracellular side. The chain crosses the membrane as a helical span at residues Leu-1185–Phe-1210. At Lys-1211–Asn-1216 the chain is on the cytoplasmic side. Residues Ala-1217–Leu-1238 traverse the membrane as a helical segment. Topologically, residues Glu-1239–Glu-1242 are extracellular. The helical; Voltage-sensor transmembrane segment at Val-1243 to Phe-1264 threads the bilayer. Residues Glu-1265–Asn-1283 are Cytoplasmic-facing. A helical membrane pass occupies residues Val-1284–Ile-1311. Residues Asn-1312, Asn-1328, and Asn-1336 are each glycosylated (N-linked (GlcNAc...) asparagine). The Extracellular segment spans residues Asn-1312–Val-1353. Residues Ala-1354–Ala-1375 constitute an intramembrane region (pore-forming). Residues Ala-1376–Asn-1391 are Extracellular-facing. Residues Val-1392–Ile-1418 form a helical membrane-spanning segment. At Asp-1419–Asp-1471 the chain is on the cytoplasmic side. Ser-1451 is subject to Phosphoserine; by PKC. One copy of the IV repeat lies at Ile-1458–Gln-1757. Residues Ile-1472 to Val-1495 form a helical membrane-spanning segment. The Extracellular portion of the chain corresponds to Glu-1496–Lys-1506. A helical transmembrane segment spans residues Ile-1507–Leu-1530. Topologically, residues Arg-1531–Thr-1536 are cytoplasmic. The helical transmembrane segment at Asn-1537–Leu-1560 threads the bilayer. At Lys-1561–Phe-1572 the chain is on the extracellular side. Residues Arg-1573 to Arg-1594 traverse the membrane as a helical; Voltage-sensor segment. Residues Thr-1595–Asn-1609 are Cytoplasmic-facing. Residues Ile-1610 to Val-1632 traverse the membrane as a helical segment. Over Arg-1633–Thr-1646 the chain is Extracellular. Positions Phe-1647–Pro-1669 form an intramembrane region, pore-forming. The Extracellular segment spans residues Ile-1670–Val-1697. N-linked (GlcNAc...) asparagine glycosylation occurs at Asn-1686. A helical membrane pass occupies residues Gly-1698 to Leu-1722. The Cytoplasmic segment spans residues Glu-1723–Pro-1956. In terms of domain architecture, IQ spans Glu-1851 to Pro-1880. Residues Ser-1909 to Pro-1956 are disordered.

This sequence belongs to the sodium channel (TC 1.A.1.10) family. Nav1.8/SCN10A subfamily. The channel consists of an ion conducting pore forming alpha-subunit regulated by one or more associated auxiliary subunits SCN1B, SCN2B and SCN3B; electrophysiological properties may vary depending on the type of the associated beta subunits. Found in a number of complexes with PRX, DYNLT1 and PDZD2. Interacts with proteins such as FSTL1, PRX, DYNLT1, PDZD2, S100A10 and many others. Interacts with NEDD4 and NEDD4L. Post-translationally, ubiquitinated by NEDD4L; which promotes its endocytosis. In terms of processing, phosphorylation at Ser-1451 by PKC in a highly conserved cytoplasmic loop slows inactivation of the sodium channel and reduces peak sodium currents. Lacks the cysteine which covalently binds the conotoxin GVIIJ. This cysteine (position 816) is speculated in other sodium channel subunits alpha to be implied in covalent binding with the sodium channel subunit beta-2 or beta-4. In terms of tissue distribution, expressed in the dorsal root ganglia and sciatic nerve.

It is found in the cell membrane. The catalysed reaction is Na(+)(in) = Na(+)(out). Functionally, tetrodotoxin-resistant channel that mediates the voltage-dependent sodium ion permeability of excitable membranes. Assuming opened or closed conformations in response to the voltage difference across the membrane, the protein forms a sodium-selective channel through which sodium ions may pass in accordance with their electrochemical gradient. Plays a role in neuropathic pain mechanisms. This Homo sapiens (Human) protein is Sodium channel protein type 10 subunit alpha.